A 266-amino-acid chain; its full sequence is Phosphatidate cytidylyltransferase (266 aa).

Helical transmembrane passes span 16-36 (VVLI…LFWA), 52-72 (LFQV…WVAA), 78-98 (PVEC…YQKA), 101-121 (SEAI…FGVY), 125-145 (GAVA…GAFF), 164-184 (LEGA…VGMG), 186-206 (LSGG…MAVF), and 237-257 (LDSM…LEIW).

The protein belongs to the CDS family.

Its subcellular location is the cell inner membrane. The enzyme catalyses a 1,2-diacyl-sn-glycero-3-phosphate + CTP + H(+) = a CDP-1,2-diacyl-sn-glycerol + diphosphate. Its pathway is phospholipid metabolism; CDP-diacylglycerol biosynthesis; CDP-diacylglycerol from sn-glycerol 3-phosphate: step 3/3. This Helicobacter pylori (strain J99 / ATCC 700824) (Campylobacter pylori J99) protein is Phosphatidate cytidylyltransferase (cdsA).